The primary structure comprises 279 residues: Bifunctional protein FolD (279 aa).

Residues 166 to 168 (GRS) and Ser191 contribute to the NADP(+) site.

This sequence belongs to the tetrahydrofolate dehydrogenase/cyclohydrolase family. Homodimer.

The catalysed reaction is (6R)-5,10-methylene-5,6,7,8-tetrahydrofolate + NADP(+) = (6R)-5,10-methenyltetrahydrofolate + NADPH. It catalyses the reaction (6R)-5,10-methenyltetrahydrofolate + H2O = (6R)-10-formyltetrahydrofolate + H(+). It functions in the pathway one-carbon metabolism; tetrahydrofolate interconversion. Catalyzes the oxidation of 5,10-methylenetetrahydrofolate to 5,10-methenyltetrahydrofolate and then the hydrolysis of 5,10-methenyltetrahydrofolate to 10-formyltetrahydrofolate. In Shouchella clausii (strain KSM-K16) (Alkalihalobacillus clausii), this protein is Bifunctional protein FolD.